The primary structure comprises 286 residues: Transcription factor egl-46 (286 aa).

The segment at Cys180–Cys200 adopts a C2H2-type 1; atypical zinc-finger fold. 2 C2H2-type zinc fingers span residues Tyr208–His230 and Val248–Gln271.

This sequence belongs to the INSM1 family. Interacts (via C-terminus) with egl-44 (via N-terminus); the interaction is direct; the interaction may regulate transcription. Expressed in touch cells, HSN cells, ventral cord motor neurons and ciliated ray neurons.

The protein localises to the nucleus. Its function is as follows. Transcription factor. Represses expression of genes involved in differentiation of touch receptor neurons (TRN), probably acting as a heterodimer with egl-44, perhaps by occupying similar cis-regulatory elements as an unc-86/mec-3 heterodimer. Plays a role in cell fate specification of neurons, including the hook neuron HOB, the gas-sensing neuron BAG and touch receptor neurons. Plays a role in neuron differentiation by repressing the expression of zag-1 in FLP neurons, probably acting as a heterodimer with egl-44; because zag-1 represses expression of egl-46 and egl-44, together these proteins form a bistable, negative-feedback loop that regulates the choice between neuronal fates. Acts downstream of egl-44 to prevent touch cell differentiation in FLP neurons. Involved in male mating behavior, acting in concert with egl-44, via modulation of expression of polycystins lov-1 and pkd-2, homeodomain protein ceh-26, and neuropeptide-like protein nlp-8. Modulates the expression of a subset of terminal differentiation genes involved in O(2)- and CO(2)-sensing, acting in parallel to ets-5 and egl-13. May act upstream of RFX transcription factor daf-19 to regulate gene expression specifically in the HOB neuron. Plays a role in specifying commissural dendrites of the PVD nociceptive neurons, acting in concert with egl-44. In association with egl-44, regulates cell cycle exit in the neuronal Q cell lineage. The protein is Transcription factor egl-46 of Caenorhabditis elegans.